Consider the following 186-residue polypeptide: Elongation factor P (186 aa).

Belongs to the elongation factor P family.

The protein resides in the cytoplasm. It functions in the pathway protein biosynthesis; polypeptide chain elongation. Its function is as follows. Involved in peptide bond synthesis. Stimulates efficient translation and peptide-bond synthesis on native or reconstituted 70S ribosomes in vitro. Probably functions indirectly by altering the affinity of the ribosome for aminoacyl-tRNA, thus increasing their reactivity as acceptors for peptidyl transferase. This Streptococcus agalactiae serotype Ia (strain ATCC 27591 / A909 / CDC SS700) protein is Elongation factor P.